We begin with the raw amino-acid sequence, 520 residues long: Cyclin-L2 (520 aa).

Residue alanine 2 is modified to N-acetylalanine. Cyclin-like stretches follow at residues 83-185 (ELIQ…RVLK) and 198-282 (KIIV…KILQ). Positions 316-520 (LPGGTQVLDG…DHPGHSRHRR (205 aa)) are disordered. Residues serine 330, serine 338, serine 348, and serine 351 each carry the phosphoserine modification. Basic and acidic residues predominate over residues 357–367 (RRLEGAKKAKA). Serine 369 carries the phosphoserine modification. The span at 376 to 390 (KGRESRSRSRSREQS) shows a compositional bias: basic and acidic residues. The segment at 385–423 (RSREQSYSRSPSRSASPKRRKSDSGSTSGGSKSQSRSRS) is RS. The segment covering 408-436 (SGSTSGGSKSQSRSRSRSDSPPRQAPRSA) has biased composition (low complexity). Residues 441 to 454 (SEIRGSRKSKDCKY) show a composition bias toward basic and acidic residues. Positions 456–471 (QKPHKSRSRSSSRSRS) are enriched in basic residues. 2 stretches are compositionally biased toward basic and acidic residues: residues 472–481 (RSRERADNPG) and 489–514 (YYRD…DHPG).

The protein belongs to the cyclin family. Cyclin L subfamily. Interacts with CDK11A, CDK11B, CDK12, CDK13 and POLR2A, the hyperphosphorylated C-terminal domain (CTD) of RNA polymerase II. May form a ternary complex with CDK11B and casein kinase II (CKII). Interacts with pre-mRNA-splicing factors, including at least SRSF1, SRSF2 AND SRSF7/SLU7. Widely expressed.

It is found in the nucleus speckle. It localises to the nucleus. The protein resides in the nucleoplasm. In terms of biological role, involved in pre-mRNA splicing. May induce cell death, possibly by acting on the transcription and RNA processing of apoptosis-related factors. The chain is Cyclin-L2 (CCNL2) from Homo sapiens (Human).